Consider the following 138-residue polypeptide: Putative nickel-responsive regulator (138 aa).

The Ni(2+) site is built by His-78, His-89, His-91, and Cys-97.

It belongs to the transcriptional regulatory CopG/NikR family. Ni(2+) is required as a cofactor.

In terms of biological role, transcriptional regulator. In Pyrococcus horikoshii (strain ATCC 700860 / DSM 12428 / JCM 9974 / NBRC 100139 / OT-3), this protein is Putative nickel-responsive regulator.